The primary structure comprises 494 residues: Trigger factor (494 aa).

The PPIase FKBP-type domain maps to 169-254 (GDRITMDYVG…VKDVAAPGAV (86 aa)). Residues 440-494 (LLAEDEGEAKAETKKAAPKKKAAAKSEAAEAGEGEEAAPKKKAAPKKKASEDSAE) form a disordered region.

Belongs to the FKBP-type PPIase family. Tig subfamily.

The protein resides in the cytoplasm. The enzyme catalyses [protein]-peptidylproline (omega=180) = [protein]-peptidylproline (omega=0). Functionally, involved in protein export. Acts as a chaperone by maintaining the newly synthesized protein in an open conformation. Functions as a peptidyl-prolyl cis-trans isomerase. In Rhizobium etli (strain ATCC 51251 / DSM 11541 / JCM 21823 / NBRC 15573 / CFN 42), this protein is Trigger factor.